Consider the following 325-residue polypeptide: 8-oxo-dGDP phosphatase NUDT18 (325 aa).

The region spanning 38-163 (NVCYIVGAVI…DILSLIDAGL (126 aa)) is the Nudix hydrolase domain. L55 contributes to the Mg(2+) binding site. A Nudix box motif is present at residues 73-94 (GRMEECESILEALQREVREEAG).

It belongs to the Nudix hydrolase family. It depends on Mn(2+) as a cofactor. Requires Mg(2+) as cofactor.

The enzyme catalyses 8-oxo-dGDP + H2O = 8-oxo-dGMP + phosphate + H(+). It carries out the reaction 8-oxo-dADP + H2O = 8-oxo-dAMP + phosphate + H(+). It catalyses the reaction 2-oxo-dADP + H2O = 2-oxo-dAMP + phosphate + H(+). The catalysed reaction is 8-oxo-GDP + H2O = 8-oxo-GMP + phosphate + H(+). Mediates the hydrolysis of oxidized nucleoside diphosphate derivatives. Hydrolyzes 8-oxo-7,8-dihydroguanine (8-oxo-Gua)-containing deoxyribo- and ribonucleoside diphosphates to the monophosphates. Hydrolyzes 8-oxo-dGDP and 8-oxo-GDP with the same efficiencies. Also hydrolyzes 8-OH-dADP and 2-OH-dADP. Exhibited no or minimal hydrolysis activity against 8-oxo-dGTP, 8-oxo-GTP, dGTP, GTP, dGDP and GDP. Probably removes oxidized guanine nucleotides from both the DNA and RNA precursor pools. This chain is 8-oxo-dGDP phosphatase NUDT18 (nudt18), found in Danio rerio (Zebrafish).